A 145-amino-acid polypeptide reads, in one-letter code: MIALIQRVTRASVTVEGEVTGEIGAGLLVLLGVEKDDDEQKANRLCERVLGYRIFSDADGKMNLNVQQAGGSVLVVSQFTLAADTERGMRPSFSKGASPDRAEALYDYFVERCRQQEMNTQTGRFAADMQVSLVNDGPVTFWLQV.

The short motif at 137-138 (GP) is the Gly-cisPro motif, important for rejection of L-amino acids element.

Belongs to the DTD family. Homodimer.

It localises to the cytoplasm. It carries out the reaction glycyl-tRNA(Ala) + H2O = tRNA(Ala) + glycine + H(+). The enzyme catalyses a D-aminoacyl-tRNA + H2O = a tRNA + a D-alpha-amino acid + H(+). Its function is as follows. An aminoacyl-tRNA editing enzyme that deacylates mischarged D-aminoacyl-tRNAs. Also deacylates mischarged glycyl-tRNA(Ala), protecting cells against glycine mischarging by AlaRS. Acts via tRNA-based rather than protein-based catalysis; rejects L-amino acids rather than detecting D-amino acids in the active site. By recycling D-aminoacyl-tRNA to D-amino acids and free tRNA molecules, this enzyme counteracts the toxicity associated with the formation of D-aminoacyl-tRNA entities in vivo and helps enforce protein L-homochirality. In Escherichia coli O81 (strain ED1a), this protein is D-aminoacyl-tRNA deacylase.